Consider the following 82-residue polypeptide: ATP synthase subunit c (82 aa).

2 helical membrane passes run 7-27 (AASV…PGIG) and 57-77 (FAFM…LLFA).

Belongs to the ATPase C chain family. As to quaternary structure, F-type ATPases have 2 components, F(1) - the catalytic core - and F(0) - the membrane proton channel. F(1) has five subunits: alpha(3), beta(3), gamma(1), delta(1), epsilon(1). F(0) has four main subunits: a(1), b(1), b'(1) and c(10-14). The alpha and beta chains form an alternating ring which encloses part of the gamma chain. F(1) is attached to F(0) by a central stalk formed by the gamma and epsilon chains, while a peripheral stalk is formed by the delta, b and b' chains.

It localises to the cellular thylakoid membrane. In terms of biological role, f(1)F(0) ATP synthase produces ATP from ADP in the presence of a proton or sodium gradient. F-type ATPases consist of two structural domains, F(1) containing the extramembraneous catalytic core and F(0) containing the membrane proton channel, linked together by a central stalk and a peripheral stalk. During catalysis, ATP synthesis in the catalytic domain of F(1) is coupled via a rotary mechanism of the central stalk subunits to proton translocation. Its function is as follows. Key component of the F(0) channel; it plays a direct role in translocation across the membrane. A homomeric c-ring of between 10-14 subunits forms the central stalk rotor element with the F(1) delta and epsilon subunits. The chain is ATP synthase subunit c from Prochlorococcus marinus (strain NATL1A).